Here is a 535-residue protein sequence, read N- to C-terminus: Butyrophilin-like protein 9 (535 aa).

The N-terminal stretch at 1-34 is a signal peptide; it reads MVDLSVSPDSLKPVSLTSSLVFLMHLLLLQPGEP. The Extracellular segment spans residues 35–256; sequence SSEVKVLGPE…VFVPGASAWK (222 aa). Residues 54–135 form the Ig-like V-type domain; the sequence is EVEFPCHLWP…SDKGTYGCRF (82 aa). Cys-59 and Cys-133 are oxidised to a cystine. N-linked (GlcNAc...) asparagine glycans are attached at residues Asn-102, Asn-139, and Asn-224. Residues 257-277 form a helical membrane-spanning segment; it reads SAFVATLPLLLVLAALALGVL. Residues 276 to 315 adopt a coiled-coil conformation; sequence VLRKQRRSREKLRKQAEKRQEKLTAELEKLQTELDWRRAE. Over 278 to 535 the chain is Cytoplasmic; that stretch reads RKQRRSREKL…EPADPALDWW (258 aa). In terms of domain architecture, B30.2/SPRY spans 310–509; the sequence is DWRRAEGQAE…LTICPLPVRG (200 aa). Residues 340–367 are disordered; that stretch reads SLEVSEDGKSVSSRGAPPGPAPGHPQRF.

Belongs to the immunoglobulin superfamily. BTN/MOG family.

It localises to the membrane. This Homo sapiens (Human) protein is Butyrophilin-like protein 9 (BTNL9).